Reading from the N-terminus, the 175-residue chain is Shikimate kinase (175 aa).

14 to 19 (GAGKST) lines the ATP pocket. Ser18 contacts Mg(2+). Residues Asp36, Arg60, and Gly82 each coordinate substrate. ATP is bound at residue Arg120. Position 140 (Arg140) interacts with substrate. Gln157 provides a ligand contact to ATP.

The protein belongs to the shikimate kinase family. Monomer. It depends on Mg(2+) as a cofactor.

The protein localises to the cytoplasm. It catalyses the reaction shikimate + ATP = 3-phosphoshikimate + ADP + H(+). Its pathway is metabolic intermediate biosynthesis; chorismate biosynthesis; chorismate from D-erythrose 4-phosphate and phosphoenolpyruvate: step 5/7. Catalyzes the specific phosphorylation of the 3-hydroxyl group of shikimic acid using ATP as a cosubstrate. This Mannheimia succiniciproducens (strain KCTC 0769BP / MBEL55E) protein is Shikimate kinase.